The chain runs to 62 residues: Photosystem II reaction center protein Z (62 aa).

2 consecutive transmembrane segments (helical) span residues 8 to 28 and 41 to 61; these read AVFA…VVLA and FSGA…NSFV.

This sequence belongs to the PsbZ family. PSII is composed of 1 copy each of membrane proteins PsbA, PsbB, PsbC, PsbD, PsbE, PsbF, PsbH, PsbI, PsbJ, PsbK, PsbL, PsbM, PsbT, PsbY, PsbZ, Psb30/Ycf12, at least 3 peripheral proteins of the oxygen-evolving complex and a large number of cofactors. It forms dimeric complexes.

The protein resides in the plastid. Its subcellular location is the chloroplast thylakoid membrane. May control the interaction of photosystem II (PSII) cores with the light-harvesting antenna, regulates electron flow through the 2 photosystem reaction centers. PSII is a light-driven water plastoquinone oxidoreductase, using light energy to abstract electrons from H(2)O, generating a proton gradient subsequently used for ATP formation. This Zygnema circumcarinatum (Green alga) protein is Photosystem II reaction center protein Z.